A 32-amino-acid polypeptide reads, in one-letter code: Photosystem II reaction center protein Z (32 aa).

A helical membrane pass occupies residues 9 to 29 (IIFSGSLIWVFLLIIVGFLNY).

It belongs to the PsbZ family. PSII is composed of 1 copy each of membrane proteins PsbA, PsbB, PsbC, PsbD, PsbE, PsbF, PsbH, PsbI, PsbJ, PsbK, PsbL, PsbM, PsbT, PsbY, PsbZ, Psb30/Ycf12, at least 3 peripheral proteins of the oxygen-evolving complex and a large number of cofactors. It forms dimeric complexes.

It localises to the plastid. Its subcellular location is the chloroplast thylakoid membrane. Its function is as follows. May control the interaction of photosystem II (PSII) cores with the light-harvesting antenna, regulates electron flow through the 2 photosystem reaction centers. PSII is a light-driven water plastoquinone oxidoreductase, using light energy to abstract electrons from H(2)O, generating a proton gradient subsequently used for ATP formation. The polypeptide is Photosystem II reaction center protein Z (Euglena myxocylindracea).